The sequence spans 440 residues: Adenylosuccinate synthetase (440 aa).

GTP-binding positions include 14-20 (GDEGKGK) and 42-44 (GHT). Asp-15 serves as the catalytic Proton acceptor. Asp-15 and Gly-42 together coordinate Mg(2+). IMP is bound by residues 15 to 18 (DEGK), 40 to 43 (NAGH), Thr-131, Arg-145, Gln-226, Thr-241, and Arg-313. His-43 (proton donor) is an active-site residue. Position 309–315 (309–315 (ATTGRQR)) interacts with substrate. Residues Arg-315, 341–343 (KLD), and 423–425 (STG) contribute to the GTP site.

The protein belongs to the adenylosuccinate synthetase family. Homodimer. Mg(2+) serves as cofactor.

It localises to the cytoplasm. The enzyme catalyses IMP + L-aspartate + GTP = N(6)-(1,2-dicarboxyethyl)-AMP + GDP + phosphate + 2 H(+). It participates in purine metabolism; AMP biosynthesis via de novo pathway; AMP from IMP: step 1/2. Its function is as follows. Plays an important role in the de novo pathway of purine nucleotide biosynthesis. Catalyzes the first committed step in the biosynthesis of AMP from IMP. The protein is Adenylosuccinate synthetase of Hydrogenovibrio crunogenus (strain DSM 25203 / XCL-2) (Thiomicrospira crunogena).